The following is a 292-amino-acid chain: Small ribosomal subunit protein uS5 (292 aa).

The interval 1–56 is disordered; sequence MADDAGAAGGPGGPGGPGMGGRGGFRGGFGSGIRGRGRGRGRGRGRGRGARGGKAE. Ala2 is subject to N-acetylalanine. The span at 7-34 shows a compositional bias: gly residues; it reads AAGGPGGPGGPGMGGRGGFRGGFGSGIR. A compositionally biased stretch (basic residues) spans 35-51; that stretch reads GRGRGRGRGRGRGRGAR. Residues Lys54 and Lys58 each participate in a glycyl lysine isopeptide (Lys-Gly) (interchain with G-Cter in ubiquitin) cross-link. Positions 102 to 165 constitute an S5 DRBM domain; that stretch reads LKDEVLKIMP…ILAKLSIVPV (64 aa). The residue at position 251 (Thr251) is a Phosphothreonine. Lys262 is modified (N6-acetyllysine). Ser263 bears the Phosphoserine mark. The residue at position 269 (Thr269) is a Phosphothreonine. Lys274 is modified (N6-acetyllysine; alternate). Lys274 is covalently cross-linked (Glycyl lysine isopeptide (Lys-Gly) (interchain with G-Cter in SUMO1); alternate). A Glycyl lysine isopeptide (Lys-Gly) (interchain with G-Cter in SUMO2); alternate cross-link involves residue Lys274. Lys274 participates in a covalent cross-link: Glycyl lysine isopeptide (Lys-Gly) (interchain with G-Cter in ubiquitin); alternate. Ser280 carries the phosphoserine modification.

Belongs to the universal ribosomal protein uS5 family. In terms of assembly, component of the small ribosomal subunit. Interacts with zinc finger protein ZNF277 (via zinc-finger domains); the interaction is direct; the interaction is extra-ribosomal. Interaction with ZNF277 competes with the binding of RPS2 to protein arginine methyltransferase PRMT3. In terms of processing, citrullinated by PADI4 in the Arg/Gly-rich region. Post-translationally, asymmetric arginine dimethylation by PRMT3 occurs at multiple sites in the Arg/Gly-rich region. Monoubiquitinated at Lys-54 and Lys-58 by RNF10 when a ribosome has stalled during translation, leading to its degradation by the proteasome. Deubiquitinated at Lys-54 and Lys-58 by USP10, preventing degradation by the proteasome and promoting 40S ribosome subunit recycling following ribosome dissociation.

The protein resides in the cytoplasm. It localises to the nucleus. Its subcellular location is the nucleolus. In terms of biological role, component of the ribosome, a large ribonucleoprotein complex responsible for the synthesis of proteins in the cell. The small ribosomal subunit (SSU) binds messenger RNAs (mRNAs) and translates the encoded message by selecting cognate aminoacyl-transfer RNA (tRNA) molecules. The large subunit (LSU) contains the ribosomal catalytic site termed the peptidyl transferase center (PTC), which catalyzes the formation of peptide bonds, thereby polymerizing the amino acids delivered by tRNAs into a polypeptide chain. The nascent polypeptides leave the ribosome through a tunnel in the LSU and interact with protein factors that function in enzymatic processing, targeting, and the membrane insertion of nascent chains at the exit of the ribosomal tunnel. Plays a role in the assembly and function of the 40S ribosomal subunit. The sequence is that of Small ribosomal subunit protein uS5 (RPS2) from Oryctolagus cuniculus (Rabbit).